The chain runs to 494 residues: mRNA decay activator protein ZFP36L2 (494 aa).

The residue at position 57 (S57) is a Phosphoserine. The interval 93–113 (GGPTSYGTLKEPSGGGGTALL) is disordered. S125 bears the Phosphoserine mark. The short motif at 153–158 (RYKTEL) is the RNA-binding element. C3H1-type zinc fingers lie at residues 153 to 181 (RYKTELCRPFEESGTCKYGEKCQFAHGFH) and 191 to 219 (KYKTELCRTFHTIGFCPYGPRCHFIHNAD). The interval 170-211 (YGEKCQFAHGFHELRSLTRHPKYKTELCRTFHTIGFCPYGPR) is RNA-binding. A Phosphothreonine modification is found at T238. 2 disordered regions span residues 257 to 293 (SLSFSGFPSGHHQPPGGLESPLLLDSPTSRTPPPPSC) and 397 to 494 (QQQQ…ISDD). A compositionally biased stretch (pro residues) spans 406–415 (PAQPPAPPSA). 2 stretches are compositionally biased toward low complexity: residues 416–435 (TLPAGAAAPPSPPFSFQLPR) and 459–478 (YLSGSLSSGSLSGSESPSLD). Residues S490 and S492 each carry the phosphoserine; by RPS6KA1 modification.

Associates with the cytoplasmic CCR4-NOT deadenylase to trigger ARE-containing mRNA deadenylation and decay processes. Interacts with CNOT7; this interaction is inhibited in response to phorbol 12-myristate 13-acetate (PMA) treatment in a p38 MAPK-dependent manner. Interacts with CNOT6L. Post-translationally, phosphorylated by RPS6KA1 at Ser-490 and Ser-492 upon phorbol 12-myristate 13-acetate (PMA) treatment; this phosphorylation results in dissociation of the CCR4-NOT-deadenylase complex and induces p38 MAPK-mediated stabilization of the low-density lipoprotein (LDL) receptor (LDLR) mRNA. Phosphorylation occurs during early preadipocyte differentiation. In terms of tissue distribution, expressed mainly in the basal epidermal layer, weakly in the suprabasal epidermal layers. Expressed in epidermal keratinocytes (at protein level). Expressed in oocytes.

The protein localises to the nucleus. It is found in the cytoplasm. Its function is as follows. Zinc-finger RNA-binding protein that destabilizes several cytoplasmic AU-rich element (ARE)-containing mRNA transcripts by promoting their poly(A) tail removal or deadenylation, and hence provide a mechanism for attenuating protein synthesis. Acts as a 3'-untranslated region (UTR) ARE mRNA-binding adapter protein to communicate signaling events to the mRNA decay machinery. Functions by recruiting the CCR4-NOT deadenylase complex and probably other components of the cytoplasmic RNA decay machinery to the bound ARE-containing mRNAs, and hence promotes ARE-mediated mRNA deadenylation and decay processes. Binds to 3'-UTR ARE of numerous mRNAs. Promotes ARE-containing mRNA decay of the low-density lipoprotein (LDL) receptor (LDLR) mRNA in response to phorbol 12-myristate 13-acetate (PMA) treatment in a p38 MAPK-dependent manner. Positively regulates early adipogenesis by promoting ARE-mediated mRNA decay of immediate early genes (IEGs). Plays a role in mature peripheral neuron integrity by promoting ARE-containing mRNA decay of the transcriptional repressor REST mRNA. Plays a role in ovulation and oocyte meiotic maturation by promoting ARE-mediated mRNA decay of the luteinizing hormone receptor LHCGR mRNA. Acts as a negative regulator of erythroid cell differentiation: promotes glucocorticoid-induced self-renewal of erythroid cells by binding mRNAs that are induced or highly expressed during terminal erythroid differentiation and promotes their degradation, preventing erythroid cell differentiation. In association with ZFP36L1 maintains quiescence on developing B lymphocytes by promoting ARE-mediated decay of several mRNAs encoding cell cycle regulators that help B cells progress through the cell cycle, and hence ensuring accurate variable-diversity-joining (VDJ) recombination process and functional immune cell formation. Together with ZFP36L1 is also necessary for thymocyte development and prevention of T-cell acute lymphoblastic leukemia (T-ALL) transformation by promoting ARE-mediated mRNA decay of the oncogenic transcription factor NOTCH1 mRNA. The chain is mRNA decay activator protein ZFP36L2 from Homo sapiens (Human).